The chain runs to 244 residues: Glucosamine-6-phosphate deaminase (244 aa).

Catalysis depends on Asp-67, which acts as the Proton acceptor; for enolization step. Residue Asn-136 is the For ring-opening step of the active site. His-138 functions as the Proton acceptor; for ring-opening step in the catalytic mechanism. The active-site For ring-opening step is the Glu-143.

It belongs to the glucosamine/galactosamine-6-phosphate isomerase family. NagB subfamily.

The enzyme catalyses alpha-D-glucosamine 6-phosphate + H2O = beta-D-fructose 6-phosphate + NH4(+). It participates in amino-sugar metabolism; N-acetylneuraminate degradation; D-fructose 6-phosphate from N-acetylneuraminate: step 5/5. Its function is as follows. Catalyzes the reversible isomerization-deamination of glucosamine 6-phosphate (GlcN6P) to form fructose 6-phosphate (Fru6P) and ammonium ion. This Clostridium botulinum (strain Loch Maree / Type A3) protein is Glucosamine-6-phosphate deaminase.